We begin with the raw amino-acid sequence, 89 residues long: Large ribosomal subunit protein eL34 (89 aa).

Positions 1–22 (MPAPRYKSGSSKKVYRKAPGNS) are disordered.

It belongs to the eukaryotic ribosomal protein eL34 family.

This chain is Large ribosomal subunit protein eL34, found in Methanococcus maripaludis (strain DSM 14266 / JCM 13030 / NBRC 101832 / S2 / LL).